A 494-amino-acid polypeptide reads, in one-letter code: uncharacterized protein (494 aa).

Belongs to the TPP enzyme family.

This is an uncharacterized protein from Methanocaldococcus jannaschii (strain ATCC 43067 / DSM 2661 / JAL-1 / JCM 10045 / NBRC 100440) (Methanococcus jannaschii).